A 148-amino-acid chain; its full sequence is HTH-type transcriptional regulator Ptr1 (148 aa).

The 62-residue stretch at 2–63 (LDRIDLKILR…SINPKNLGFE (62 aa)) folds into the HTH asnC-type domain. A DNA-binding region (H-T-H motif) is located at residues 21-40 (FREIGRELGISEGTVRNRVK).

As to quaternary structure, homodimer.

Participates in positive as well as negative regulation of transcription. Binds to its own promoter. The protein is HTH-type transcriptional regulator Ptr1 (ptr1) of Methanocaldococcus jannaschii (strain ATCC 43067 / DSM 2661 / JAL-1 / JCM 10045 / NBRC 100440) (Methanococcus jannaschii).